An 89-amino-acid chain; its full sequence is Small ribosomal subunit protein uS15 (89 aa).

The protein belongs to the universal ribosomal protein uS15 family. Part of the 30S ribosomal subunit. Forms a bridge to the 50S subunit in the 70S ribosome, contacting the 23S rRNA.

Its function is as follows. One of the primary rRNA binding proteins, it binds directly to 16S rRNA where it helps nucleate assembly of the platform of the 30S subunit by binding and bridging several RNA helices of the 16S rRNA. Functionally, forms an intersubunit bridge (bridge B4) with the 23S rRNA of the 50S subunit in the ribosome. The protein is Small ribosomal subunit protein uS15 of Nostoc sp. (strain PCC 7120 / SAG 25.82 / UTEX 2576).